The following is a 334-amino-acid chain: Protein-methionine-sulfoxide reductase catalytic subunit MsrP (334 aa).

Positions 1-44 form a signal peptide, tat-type signal; the sequence is MKKNQFLKESDVTAESVFFMKRRQVLKALGISAAALSLPHAAHA. Mo-molybdopterin contacts are provided by residues Asn-88, 91-92, Cys-146, Thr-181, Asn-233, Arg-238, and 249-251; these read YE and GIK.

It belongs to the MsrP family. Heterodimer of a catalytic subunit (MsrP) and a heme-binding subunit (MsrQ). It depends on Mo-molybdopterin as a cofactor. Predicted to be exported by the Tat system. The position of the signal peptide cleavage has not been experimentally proven.

The protein localises to the periplasm. It carries out the reaction L-methionyl-[protein] + a quinone + H2O = L-methionyl-(S)-S-oxide-[protein] + a quinol. The catalysed reaction is L-methionyl-[protein] + a quinone + H2O = L-methionyl-(R)-S-oxide-[protein] + a quinol. Functionally, part of the MsrPQ system that repairs oxidized periplasmic proteins containing methionine sulfoxide residues (Met-O), using respiratory chain electrons. Thus protects these proteins from oxidative-stress damage caused by reactive species of oxygen and chlorine generated by the host defense mechanisms. MsrPQ is essential for the maintenance of envelope integrity under bleach stress, rescuing a wide series of structurally unrelated periplasmic proteins from methionine oxidation, including the primary periplasmic chaperone SurA and the lipoprotein Pal. The catalytic subunit MsrP is non-stereospecific, being able to reduce both (R-) and (S-) diastereoisomers of methionine sulfoxide. The sequence is that of Protein-methionine-sulfoxide reductase catalytic subunit MsrP from Escherichia coli O9:H4 (strain HS).